The following is a 352-amino-acid chain: MELLNATLAKIYGLDKEAMVKAQAHQDILIKPQGSLGKLEAIVVQLAGIQGDAKPKTAKKAIITMAGDHGIIDEKFHNWPKEVTVQMLQNFAHGGAAINVLSRQVGARNVVVALGVATPMAADPNIINRNIAPGTNNMVHGPAMTREQAVKAIEVGIEIVNAEVKKGLDLVGTGDMGIGNTSPSAAICSIITGRSLEDVTGRGTGASDEQMKLKRNAIAKAISLNNPDAKDAIDVLSKVGGYEIGGLAGVILGAAANRVAVVVDGFISGAAALIAYTICPQVKDFMFAAHQSVEPGHRILLEHMGLDAILKMDMRLGEGTGAALAMNIIEAANRIQHEMASFADAGVSEKQS.

The active-site Proton acceptor is the E318.

It belongs to the CobT family.

It catalyses the reaction 5,6-dimethylbenzimidazole + nicotinate beta-D-ribonucleotide = alpha-ribazole 5'-phosphate + nicotinate + H(+). It functions in the pathway nucleoside biosynthesis; alpha-ribazole biosynthesis; alpha-ribazole from 5,6-dimethylbenzimidazole: step 1/2. Catalyzes the synthesis of alpha-ribazole-5'-phosphate from nicotinate mononucleotide (NAMN) and 5,6-dimethylbenzimidazole (DMB). The sequence is that of Nicotinate-nucleotide--dimethylbenzimidazole phosphoribosyltransferase from Dehalococcoides mccartyi (strain CBDB1).